We begin with the raw amino-acid sequence, 335 residues long: Rho guanine nucleotide exchange factor 39 (335 aa).

The DH domain occupies 22 to 197 (KRACTARELL…SETAQRVHTI (176 aa)). A PH domain is found at 227 to 331 (WFLRQGWLLV…WYHSLTLAIS (105 aa)).

The protein localises to the cell membrane. In terms of biological role, promotes cell proliferation. The protein is Rho guanine nucleotide exchange factor 39 (ARHGEF39) of Bos taurus (Bovine).